The sequence spans 179 residues: Adenine phosphoribosyltransferase (179 aa).

It belongs to the purine/pyrimidine phosphoribosyltransferase family. In terms of assembly, homodimer.

The protein localises to the cytoplasm. It catalyses the reaction AMP + diphosphate = 5-phospho-alpha-D-ribose 1-diphosphate + adenine. Its pathway is purine metabolism; AMP biosynthesis via salvage pathway; AMP from adenine: step 1/1. Its function is as follows. Catalyzes a salvage reaction resulting in the formation of AMP, that is energically less costly than de novo synthesis. The polypeptide is Adenine phosphoribosyltransferase (Azorhizobium caulinodans (strain ATCC 43989 / DSM 5975 / JCM 20966 / LMG 6465 / NBRC 14845 / NCIMB 13405 / ORS 571)).